The primary structure comprises 190 residues: Shikimate kinase (190 aa).

Residue 26-31 (GSGKST) coordinates ATP. Ser-30 serves as a coordination point for Mg(2+). Substrate is bound by residues Asp-48, Arg-72, and Gly-94. Arg-133 provides a ligand contact to ATP. Substrate is bound at residue Arg-152.

It belongs to the shikimate kinase family. Monomer. The cofactor is Mg(2+).

It localises to the cytoplasm. The enzyme catalyses shikimate + ATP = 3-phosphoshikimate + ADP + H(+). It functions in the pathway metabolic intermediate biosynthesis; chorismate biosynthesis; chorismate from D-erythrose 4-phosphate and phosphoenolpyruvate: step 5/7. Its function is as follows. Catalyzes the specific phosphorylation of the 3-hydroxyl group of shikimic acid using ATP as a cosubstrate. The protein is Shikimate kinase of Prochlorococcus marinus (strain SARG / CCMP1375 / SS120).